Here is a 447-residue protein sequence, read N- to C-terminus: MSQNHTILQNLPVGQKVGIAFSGGLDTSAALLWMKLKGALPYAYTANLGQPDEDDYNAIPKKAMEYGAENARLIDCRAQLAHEGIAAIQCGAFHVSTGGIAYFNTTPLGRAVTGTMLVSAMKEDDVNIWGDGSTYKGNDIERFYRYGLLTNPALKIYKPWLDQQFIDELGGRHEMSEFLIANGFNYKMSVEKAYSTDSNMLGATHEAKDLEFLNSGIKIVKPIMGVAFWDENVEVSPEEVSVRFEEGVPVALNGKEYADPVELFLEANRIGGRHGLGMSDQIENRIIEAKSRGIYEAPGMALFHIAYERLVTGIHNEDTIEQYRINGLRLGRLLYQGRWFDSQALMLRETAQRWVAKAVTGEVTLELRRGNDYSILNTESPNLTYQPERLSMEKVEGAAFTPLDRIGQLTMRNLDITDTRAKLGIYSQSGLLSLGEGSVLPQLGNKK.

ATP-binding positions include 20–28 and alanine 46; that span reads AFSGGLDTS. Residue tyrosine 102 coordinates L-citrulline. Residues glycine 132 and threonine 134 each coordinate ATP. Residues threonine 134, asparagine 138, and aspartate 139 each contribute to the L-aspartate site. An L-citrulline-binding site is contributed by asparagine 138. Residue aspartate 139 participates in ATP binding. Residues arginine 142 and serine 195 each coordinate L-citrulline. An ATP-binding site is contributed by aspartate 197. Positions 204, 206, and 283 each coordinate L-citrulline.

Belongs to the argininosuccinate synthase family. Type 2 subfamily. In terms of assembly, homotetramer.

It is found in the cytoplasm. The enzyme catalyses L-citrulline + L-aspartate + ATP = 2-(N(omega)-L-arginino)succinate + AMP + diphosphate + H(+). Its pathway is amino-acid biosynthesis; L-arginine biosynthesis; L-arginine from L-ornithine and carbamoyl phosphate: step 2/3. The polypeptide is Argininosuccinate synthase (Neisseria meningitidis serogroup C / serotype 2a (strain ATCC 700532 / DSM 15464 / FAM18)).